A 726-amino-acid polypeptide reads, in one-letter code: Probable pre-mRNA-splicing factor ATP-dependent RNA helicase DEAH2 (726 aa).

The Helicase ATP-binding domain maps to 71-240 (LKTLNNNQTL…FSGAPLMKVP (170 aa)). 84-91 (GETGSGKT) provides a ligand contact to ATP. Residues 187–190 (DEAH) carry the DEAH box motif. In terms of domain architecture, Helicase C-terminal spans 265–445 (TVVQIHMCEP…NTVLTLKKLG (181 aa)).

It belongs to the DEAD box helicase family. DEAH subfamily. PRP43 sub-subfamily.

It carries out the reaction ATP + H2O = ADP + phosphate + H(+). Its function is as follows. May be involved in pre-mRNA splicing. This is Probable pre-mRNA-splicing factor ATP-dependent RNA helicase DEAH2 from Arabidopsis thaliana (Mouse-ear cress).